Here is a 190-residue protein sequence, read N- to C-terminus: CASP-like protein 2U1 (190 aa).

The Cytoplasmic segment spans residues 1–16 (MAFTSLLGSDAERKVA). A helical transmembrane segment spans residues 17–37 (VAEVALRAVLCGLGALAAALV). Residues 38–59 (ATDTQTRTFFSLQKKATYTDMK) are Extracellular-facing. The helical transmembrane segment at 60–80 (AMVLLVAAAAAAAGYSLLQAA) threads the bilayer. At 81 to 100 (RCCCCVALLRTSIRPRARLL) the chain is on the cytoplasmic side. A helical membrane pass occupies residues 101–121 (LAWCVFACDQALAYALLAAVV). At 122 to 152 (AALQASVVAKQGLPQLQWMAICALYGAFCRQ) the chain is on the extracellular side. A helical membrane pass occupies residues 153-173 (AGAGVACAVAAAVDAALLAFL). Residues 174-190 (SAFNLFRLYGAKATTTT) lie on the Cytoplasmic side of the membrane.

It belongs to the Casparian strip membrane proteins (CASP) family. Homodimer and heterodimers.

Its subcellular location is the cell membrane. The sequence is that of CASP-like protein 2U1 from Zea mays (Maize).